The primary structure comprises 326 residues: MSQLTDGFGRSFPYLRLSLTEACNFRCSYCLPDGYQADGRPRFLQVDEIARLVRAFAALGMSKIRLTGGEPSLRKDLDEIIATVAAVPGIRKVAITTNGTLLPRRLPGWHRAGLTALNVSMDSLQRERFKTITGHDRLPEIEQGLALAQALGLPAIKLNAVLLRGLNDDELPQWMDYLRGRPFSVRFIELMRTGDNEAYFQRHHLRADVVIEQLLAAGWHERPRAADAGPAREFGHPDHRGSIGIIAPYSRDFCKGCNRLRVTAKGDLRLCLFGEFGVPLRPLLQRDEDHDALLARITTQLGLKAAGHGLHQGQTGLTPHLASIGG.

The Radical SAM core domain maps to 7 to 232 (GFGRSFPYLR…PRAADAGPAR (226 aa)). Residue arginine 16 participates in GTP binding. Residues cysteine 23 and cysteine 27 each contribute to the [4Fe-4S] cluster site. Tyrosine 29 contributes to the S-adenosyl-L-methionine binding site. Cysteine 30 lines the [4Fe-4S] cluster pocket. Arginine 65 serves as a coordination point for GTP. Position 69 (glycine 69) interacts with S-adenosyl-L-methionine. Threonine 96 provides a ligand contact to GTP. Serine 120 contributes to the S-adenosyl-L-methionine binding site. Lysine 157 contacts GTP. Residue methionine 191 coordinates S-adenosyl-L-methionine. Residues cysteine 254 and cysteine 257 each coordinate [4Fe-4S] cluster. 259–261 (RLR) contacts GTP. Cysteine 271 is a binding site for [4Fe-4S] cluster.

It belongs to the radical SAM superfamily. MoaA family. In terms of assembly, monomer and homodimer. It depends on [4Fe-4S] cluster as a cofactor.

The catalysed reaction is GTP + AH2 + S-adenosyl-L-methionine = (8S)-3',8-cyclo-7,8-dihydroguanosine 5'-triphosphate + 5'-deoxyadenosine + L-methionine + A + H(+). It participates in cofactor biosynthesis; molybdopterin biosynthesis. Functionally, catalyzes the cyclization of GTP to (8S)-3',8-cyclo-7,8-dihydroguanosine 5'-triphosphate. The sequence is that of GTP 3',8-cyclase from Stenotrophomonas maltophilia (strain K279a).